We begin with the raw amino-acid sequence, 284 residues long: RNA polymerase sigma factor RpoH (284 aa).

A sigma-70 factor domain-2 region spans residues 53–122 (LILSHLRFVI…IHEYVLRNWR (70 aa)). The Interaction with polymerase core subunit RpoC signature appears at 77-80 (DLIQ). Positions 228 to 280 (ALLRLDERSRHIIHARWLDKNKKNTLQNIANNYGISAERVRQLEKNAMKKLKL) are sigma-70 factor domain-4. Positions 253–272 (LQNIANNYGISAERVRQLEK) form a DNA-binding region, H-T-H motif.

This sequence belongs to the sigma-70 factor family. RpoH subfamily. In terms of assembly, interacts with the RNA polymerase core enzyme.

The protein localises to the cytoplasm. Its function is as follows. Sigma factors are initiation factors that promote the attachment of RNA polymerase to specific initiation sites and are then released. This sigma factor is involved in regulation of expression of heat shock genes. The chain is RNA polymerase sigma factor RpoH from Buchnera aphidicola subsp. Acyrthosiphon pisum (strain APS) (Acyrthosiphon pisum symbiotic bacterium).